Reading from the N-terminus, the 726-residue chain is Bromodomain-containing protein 3 (726 aa).

The disordered stretch occupies residues 1-35 (MSTATTVAPAGIPATPGPVNPPPPEVSNPSKPGRK). Ser-2 is modified (N-acetylserine). A compositionally biased stretch (pro residues) spans 15–26 (TPGPVNPPPPEV). A Bromo 1 domain is found at 34–140 (RKTNQLQYMQ…KIFLQKVAQM (107 aa)). Residues 78–80 (KNP) are acetylated histone H3 binding. Disordered regions lie at residues 149 to 169 (PPAP…AGTQ) and 237 to 305 (VKKK…AGKK). Low complexity predominate over residues 248-261 (TTTPTTSAITASRS). Residues Ser-263 and Ser-281 each carry the phosphoserine modification. One can recognise a Bromo 2 domain in the interval 306 to 415 (GKLSEHLRYC…DVFEMRFAKM (110 aa)). Lys-414 participates in a covalent cross-link: Glycyl lysine isopeptide (Lys-Gly) (interchain with G-Cter in SUMO2). Disordered regions lie at residues 421 to 462 (EAPA…RATR), 477 to 575 (LAAL…MSYD), and 637 to 726 (LQKK…SDSE). Residues 453–524 (SDSEEERATR…AEEEKKAKVA (72 aa)) are a coiled coil. Over residues 487–503 (KPKKKKEKKEKEKKKKD) the composition is skewed to basic residues. Over residues 504 to 521 (KEKEKEKHKVKAEEEKKA) the composition is skewed to basic and acidic residues. Residues 523–540 (VAPPAKQAQQKKAPAKKA) show a composition bias toward low complexity. An NET domain is found at 562–644 (DSEEEEEGLP…SCLQKKQRKP (83 aa)). The residue at position 563 (Ser-563) is a Phosphoserine. Residues 645–684 (FSASGKKQAAKSKEELAQEKKKELEKRLQDVSGQLSSSKK) adopt a coiled-coil conformation. The segment covering 655-673 (KSKEELAQEKKKELEKRLQ) has biased composition (basic and acidic residues). The segment covering 692–726 (GSAPSGGPSRLSSSSSSESGSSSSSGSSSDSSDSE) has biased composition (low complexity).

The protein belongs to the BET family. As to quaternary structure, interacts (via bromo domain 1) with GATA1 acetylated at 'Lys-312' and 'Lys-315'. Interacts (via bromo domain 1) with GATA2 acetylated on lysine residues. Interacts (via NET domain) with CHD4 (via KIKL motif). Interacts (via NET domain) with SMARCA4 (via KIKL motif). Interacts (via NET domain) with NSD3 (via KIKL motif). (Microbial infection) Interacts with the Integrase protein of Moloney murine leukemia virus (MLV). As to expression, ubiquitous.

It is found in the nucleus. The protein localises to the chromosome. Its activity is regulated as follows. Inhibited by JQ1, a thieno-triazolo-1,4-diazepine derivative, which specifically inhibits members of the BET family (BRD2, BRD3 and BRD4). The first bromo domain is inhibited by GSK778 (iBET-BD1), which specifically inhibits the first bromo domain of members of the BET family (BRD2, BRD3 and BRD4). The second bromo domain is inhibited by ABBV-744, which specifically inhibits the second bromo domain of members of the BET family (BRD2, BRD3 and BRD4). The second bromo domain is inhibited by GSK046 (iBET-BD2), which specifically inhibits the second bromo domain of members of the BET family (BRD2, BRD3 and BRD4). In terms of biological role, chromatin reader that recognizes and binds acetylated histones, thereby controlling gene expression and remodeling chromatin structures. Recruits transcription factors and coactivators to target gene sites, and activates RNA polymerase II machinery for transcriptional elongation. In vitro, binds acetylated lysine residues on the N-terminus of histone H2A, H2B, H3 and H4. Involved in endoderm differentiation via its association with long non-coding RNA (lncRNA) DIGIT: BRD3 undergoes liquid-liquid phase separation upon binding to lncRNA DIGIT, promoting binding to histone H3 acetylated at 'Lys-18' (H3K18ac) to induce endoderm gene expression. Also binds non-histones acetylated proteins, such as GATA1 and GATA2: regulates transcription by promoting the binding of the transcription factor GATA1 to its targets. The protein is Bromodomain-containing protein 3 of Homo sapiens (Human).